The chain runs to 193 residues: MVGVTLANVLPVCLALLPPPAAGLYYLAELIEEYTVATSRIIKYMIWFSTAVLIGLYVFERFPTYMIGVGLFTNLVYFGLLQTFPFIMLTSPNFILSCGLVVVNHYLAFQFFAEEYYPFSEVLAYFTFCLWIIPFAFFVSLSAGENVLPSTMQPGDDVVSNYFTKGKRGKRLGILVVFSFIKEAILPSRQKIY.

A run of 5 helical transmembrane segments spans residues 1–21 (MVGV…PPPA), 39–59 (SRII…LYVF), 67–87 (IGVG…FPFI), 94–114 (FILS…FFAE), and 122–142 (VLAY…VSLS).

It belongs to the SVP26 family.

It is found in the membrane. The sequence is that of Protein TEX261 (TEX261) from Bos taurus (Bovine).